A 338-amino-acid chain; its full sequence is Purple acid phosphatase 17 (338 aa).

The signal sequence occupies residues 1 to 31 (MNSGRRSLMSATASLSLLLCIFTTFVVVSNG). Position 53 (Asp53) interacts with Fe cation. N-linked (GlcNAc...) asparagine glycosylation is present at Asn61. Fe cation is bound by residues Asp86 and Tyr89. Asp86 contributes to the Zn(2+) binding site. 2 residues coordinate Zn(2+): Asn124 and His218. The Proton donor role is filled by His227. His253 is a binding site for Zn(2+). 253-255 (HDH) provides a ligand contact to substrate. His255 serves as a coordination point for Fe cation.

The protein belongs to the metallophosphoesterase superfamily. Purple acid phosphatase family. As to quaternary structure, homodimer. Fe cation serves as cofactor. It depends on Zn(2+) as a cofactor. As to expression, expressed in roots, stems, leaves, flowers and siliques.

Its subcellular location is the secreted. It catalyses the reaction a phosphate monoester + H2O = an alcohol + phosphate. The enzyme catalyses 2 a phenolic donor + H2O2 = 2 a phenolic radical donor + 2 H2O. With respect to regulation, inhibited by phosphate and molybdate. Metallo-phosphoesterase involved in phosphate metabolism. Has a peroxidase activity. This is Purple acid phosphatase 17 (PAP17) from Arabidopsis thaliana (Mouse-ear cress).